The sequence spans 507 residues: Fluoroacetaldehyde dehydrogenase (507 aa).

Position 219–225 (219–225 (GFGIEAG)) interacts with NAD(+). Residues Glu-263 and Cys-302 contribute to the active site.

This sequence belongs to the aldehyde dehydrogenase family. As to quaternary structure, homotetramer.

The enzyme catalyses fluoroacetaldehyde + NAD(+) + H2O = fluoroacetate + NADH + 2 H(+). In terms of biological role, catalyzes the oxidation of fluoroacetaldehyde to fluoroacetate. Has high affinity for fluoroacetate and glycolaldehyde but not for acetaldehyde. The sequence is that of Fluoroacetaldehyde dehydrogenase from Streptantibioticus cattleyicolor (strain ATCC 35852 / DSM 46488 / JCM 4925 / NBRC 14057 / NRRL 8057) (Streptomyces cattleya).